The primary structure comprises 459 residues: Bifunctional protein GlmU (459 aa).

The segment at 1–230 (MSNRFAVILA…FDETLGVNDR (230 aa)) is pyrophosphorylase. UDP-N-acetyl-alpha-D-glucosamine contacts are provided by residues 9 to 12 (LAAG), Lys23, Gln73, and 78 to 79 (GT). Position 103 (Asp103) interacts with Mg(2+). The UDP-N-acetyl-alpha-D-glucosamine site is built by Gly140, Glu155, Asn170, and Asn228. Residue Asn228 coordinates Mg(2+). The linker stretch occupies residues 231–251 (VALSQAEIIMKNRINRKNMVN). An N-acetyltransferase region spans residues 252 to 459 (GVTIIDPSNT…VDQLLNKKKS (208 aa)). UDP-N-acetyl-alpha-D-glucosamine is bound by residues Arg333 and Lys351. His363 (proton acceptor) is an active-site residue. Residues Tyr366 and Asn377 each contribute to the UDP-N-acetyl-alpha-D-glucosamine site. Acetyl-CoA-binding positions include 386–387 (NY), Ala423, and Arg440.

In the N-terminal section; belongs to the N-acetylglucosamine-1-phosphate uridyltransferase family. This sequence in the C-terminal section; belongs to the transferase hexapeptide repeat family. In terms of assembly, homotrimer. It depends on Mg(2+) as a cofactor.

The protein localises to the cytoplasm. The enzyme catalyses alpha-D-glucosamine 1-phosphate + acetyl-CoA = N-acetyl-alpha-D-glucosamine 1-phosphate + CoA + H(+). It carries out the reaction N-acetyl-alpha-D-glucosamine 1-phosphate + UTP + H(+) = UDP-N-acetyl-alpha-D-glucosamine + diphosphate. It participates in nucleotide-sugar biosynthesis; UDP-N-acetyl-alpha-D-glucosamine biosynthesis; N-acetyl-alpha-D-glucosamine 1-phosphate from alpha-D-glucosamine 6-phosphate (route II): step 2/2. Its pathway is nucleotide-sugar biosynthesis; UDP-N-acetyl-alpha-D-glucosamine biosynthesis; UDP-N-acetyl-alpha-D-glucosamine from N-acetyl-alpha-D-glucosamine 1-phosphate: step 1/1. It functions in the pathway bacterial outer membrane biogenesis; LPS lipid A biosynthesis. Catalyzes the last two sequential reactions in the de novo biosynthetic pathway for UDP-N-acetylglucosamine (UDP-GlcNAc). The C-terminal domain catalyzes the transfer of acetyl group from acetyl coenzyme A to glucosamine-1-phosphate (GlcN-1-P) to produce N-acetylglucosamine-1-phosphate (GlcNAc-1-P), which is converted into UDP-GlcNAc by the transfer of uridine 5-monophosphate (from uridine 5-triphosphate), a reaction catalyzed by the N-terminal domain. This chain is Bifunctional protein GlmU, found in Bacillus anthracis (strain A0248).